We begin with the raw amino-acid sequence, 220 residues long: Probable septum site-determining protein MinC (220 aa).

It belongs to the MinC family. As to quaternary structure, interacts with MinD and FtsZ.

In terms of biological role, cell division inhibitor that blocks the formation of polar Z ring septums. Rapidly oscillates between the poles of the cell to destabilize FtsZ filaments that have formed before they mature into polar Z rings. Prevents FtsZ polymerization. The chain is Probable septum site-determining protein MinC from Vibrio vulnificus (strain CMCP6).